We begin with the raw amino-acid sequence, 318 residues long: Porphobilinogen deaminase (318 aa).

At Cys241 the chain carries S-(dipyrrolylmethanemethyl)cysteine.

Belongs to the HMBS family. Monomer. Requires dipyrromethane as cofactor.

It catalyses the reaction 4 porphobilinogen + H2O = hydroxymethylbilane + 4 NH4(+). The protein operates within porphyrin-containing compound metabolism; protoporphyrin-IX biosynthesis; coproporphyrinogen-III from 5-aminolevulinate: step 2/4. Its function is as follows. Tetrapolymerization of the monopyrrole PBG into the hydroxymethylbilane pre-uroporphyrinogen in several discrete steps. The chain is Porphobilinogen deaminase from Geotalea daltonii (strain DSM 22248 / JCM 15807 / FRC-32) (Geobacter daltonii).